A 237-amino-acid polypeptide reads, in one-letter code: MTNELVYEGKAKQLFKTEEAGVLRVAYKDDATALNGVRKESFAGKGELNNQITALIFSYLEEAGIRSHFIRAISETEQLVKEVSIIPLEVVVRNVIAGSLAKRLGKEEGEEIPSAIVEFYYKEDALDDPFINDDHVLYLEIATTNEMEVIRKAARSINEVLQVLFNQMNITLIDFKLEFGRDADGNILLADEISPDTCRLWDKETKQKLDKDVFRRNIGNLTDVYTEVLNRLKQVQN.

The protein belongs to the SAICAR synthetase family.

It carries out the reaction 5-amino-1-(5-phospho-D-ribosyl)imidazole-4-carboxylate + L-aspartate + ATP = (2S)-2-[5-amino-1-(5-phospho-beta-D-ribosyl)imidazole-4-carboxamido]succinate + ADP + phosphate + 2 H(+). It participates in purine metabolism; IMP biosynthesis via de novo pathway; 5-amino-1-(5-phospho-D-ribosyl)imidazole-4-carboxamide from 5-amino-1-(5-phospho-D-ribosyl)imidazole-4-carboxylate: step 1/2. This Listeria welshimeri serovar 6b (strain ATCC 35897 / DSM 20650 / CCUG 15529 / CIP 8149 / NCTC 11857 / SLCC 5334 / V8) protein is Phosphoribosylaminoimidazole-succinocarboxamide synthase.